Reading from the N-terminus, the 283-residue chain is Tetraspanin-33 (283 aa).

Residues Met-1–Tyr-24 are Cytoplasmic-facing. The chain crosses the membrane as a helical span at residues Leu-25–Val-45. At Tyr-46–Pro-64 the chain is on the extracellular side. The chain crosses the membrane as a helical span at residues Ala-65–Gly-85. The Cytoplasmic segment spans residues Ser-86 to Thr-96. A helical membrane pass occupies residues Phe-97–Val-117. At Phe-118–Asn-235 the chain is on the extracellular side. Intrachain disulfides connect Cys-156–Cys-224, Cys-157–Cys-189, Cys-173–Cys-183, and Cys-190–Cys-203. N-linked (GlcNAc...) asparagine glycosylation occurs at Asn-172. A helical transmembrane segment spans residues Leu-236–Leu-256. At Ser-257 to Tyr-283 the chain is on the cytoplasmic side.

Belongs to the tetraspanin (TM4SF) family. Homodimer; disulfide-linked. Interacts (via extracellular domain) with ADAM10 (via extracellular domain). Interacts (via cytoplasmic domain) with PLEKHA7 (via WW domains); the interaction is dependent on PDZD11 being bound to PLEKHA7 and facilitates the docking of ADAM10 to zonula adherens. Predominantly expressed in erythroblasts.

It localises to the cell membrane. The protein resides in the cell junction. It is found in the adherens junction. Its subcellular location is the cytoplasm. In terms of biological role, part of TspanC8 subgroup, composed of 6 members that interact with the transmembrane metalloprotease ADAM10. This interaction is required for ADAM10 exit from the endoplasmic reticulum and for enzymatic maturation and trafficking to the cell surface as well as substrate specificity. Different TspanC8/ADAM10 complexes have distinct substrates. Plays an important role in normal erythropoiesis. It has a role in the differentiation of erythroid progenitors. Negatively regulates ligand-induced Notch activity probably by regulating ADAM10 activity. Mediates docking of ADAM10 to zonula adherens by interacting with ADAM10 and, in a PDZD11-dependent manner, with the zonula adherens protein PLEKHA7. The protein is Tetraspanin-33 (Tspan33) of Mus musculus (Mouse).